Reading from the N-terminus, the 417-residue chain is Aminoacyltransferase FemB (417 aa).

It belongs to the FemABX family.

It localises to the cytoplasm. The enzyme catalyses MurNAc-L-Ala-D-isoglutaminyl-L-Lys-(N(6)-tri-Gly)-D-Ala-D-Ala-diphospho-di-trans,octa-cis-undecaprenyl-GlcNAc + 2 glycyl-tRNA(Gly) = MurNAc-L-Ala-D-isoglutaminyl-L-Lys-(N(6)-penta-Gly)-D-Ala-D-Ala-diphospho-di-trans,octa-cis-undecaprenyl-GlcNAc + 2 tRNA(Gly) + 2 H(+). In terms of biological role, catalyzes the incorporation of amino acid(s) into the interchain peptide bridge of peptidoglycan, using aminoacyl-tRNA as amino acid donor. This Staphylococcus epidermidis protein is Aminoacyltransferase FemB (femB).